Reading from the N-terminus, the 274-residue chain is 2,3,4,5-tetrahydropyridine-2,6-dicarboxylate N-succinyltransferase (274 aa).

R104 and D141 together coordinate substrate.

The protein belongs to the transferase hexapeptide repeat family. As to quaternary structure, homotrimer.

Its subcellular location is the cytoplasm. The catalysed reaction is (S)-2,3,4,5-tetrahydrodipicolinate + succinyl-CoA + H2O = (S)-2-succinylamino-6-oxoheptanedioate + CoA. Its pathway is amino-acid biosynthesis; L-lysine biosynthesis via DAP pathway; LL-2,6-diaminopimelate from (S)-tetrahydrodipicolinate (succinylase route): step 1/3. The protein is 2,3,4,5-tetrahydropyridine-2,6-dicarboxylate N-succinyltransferase of Shewanella frigidimarina (strain NCIMB 400).